A 257-amino-acid chain; its full sequence is MSAPFRFPRFFVTSPAPCPYLAGRTERKVFTELSGNNATELNDALGRIGFRRSQSVAYRPSCADCSACVSVRVCASEFAPSNSQKRTLRRNGDLVVTACKPWATEEQYALLRSYLASRHPDGGMADMDEQDFADMVEQTPVDSYMIEYREPVAGGGKGRLVGCCLTDRQGDGLSMIYSFFDAHHPLREGLGTYIIADHVLRAAKAGLPYVYLGYWIEGSARMAYKARFRPLEKLGPDGWSRFEPTPSERIAAMFELA.

This sequence belongs to the R-transferase family. Bpt subfamily.

The protein resides in the cytoplasm. The enzyme catalyses N-terminal L-glutamyl-[protein] + L-leucyl-tRNA(Leu) = N-terminal L-leucyl-L-glutamyl-[protein] + tRNA(Leu) + H(+). It catalyses the reaction N-terminal L-aspartyl-[protein] + L-leucyl-tRNA(Leu) = N-terminal L-leucyl-L-aspartyl-[protein] + tRNA(Leu) + H(+). Functions in the N-end rule pathway of protein degradation where it conjugates Leu from its aminoacyl-tRNA to the N-termini of proteins containing an N-terminal aspartate or glutamate. This Sphingopyxis alaskensis (strain DSM 13593 / LMG 18877 / RB2256) (Sphingomonas alaskensis) protein is Aspartate/glutamate leucyltransferase.